Reading from the N-terminus, the 196-residue chain is Holliday junction branch migration complex subunit RuvA (196 aa).

Residues 1–63 (MYDYIKGTLV…DDAHLLFGFH (63 aa)) are domain I. Positions 64–142 (TEDEKEVFLK…ELPAETTNTT (79 aa)) are domain II. Residues 143–146 (ANQT) form a flexible linker region. The domain III stretch occupies residues 147 to 196 (AGNQQLDEAMEALLALGYKATELKKVKAFFEDTNETAEQYIKSALKMLMK).

It belongs to the RuvA family. In terms of assembly, homotetramer. Forms an RuvA(8)-RuvB(12)-Holliday junction (HJ) complex. HJ DNA is sandwiched between 2 RuvA tetramers; dsDNA enters through RuvA and exits via RuvB. An RuvB hexamer assembles on each DNA strand where it exits the tetramer. Each RuvB hexamer is contacted by two RuvA subunits (via domain III) on 2 adjacent RuvB subunits; this complex drives branch migration. In the full resolvosome a probable DNA-RuvA(4)-RuvB(12)-RuvC(2) complex forms which resolves the HJ.

It localises to the cytoplasm. In terms of biological role, the RuvA-RuvB-RuvC complex processes Holliday junction (HJ) DNA during genetic recombination and DNA repair, while the RuvA-RuvB complex plays an important role in the rescue of blocked DNA replication forks via replication fork reversal (RFR). RuvA specifically binds to HJ cruciform DNA, conferring on it an open structure. The RuvB hexamer acts as an ATP-dependent pump, pulling dsDNA into and through the RuvAB complex. HJ branch migration allows RuvC to scan DNA until it finds its consensus sequence, where it cleaves and resolves the cruciform DNA. This chain is Holliday junction branch migration complex subunit RuvA, found in Streptococcus thermophilus (strain ATCC BAA-491 / LMD-9).